We begin with the raw amino-acid sequence, 181 residues long: RNA pyrophosphohydrolase (181 aa).

The Nudix hydrolase domain occupies 6-149; that stretch reads GFRPNVGIIL…KRRVYTRALQ (144 aa). A Nudix box motif is present at residues 38–59; sequence GGIKAQETPEEALFRELEEEVG. The interval 159-181 is disordered; the sequence is GLPRQPPVGRPRRSAPPRGCRRA. Over residues 168–181 the composition is skewed to basic residues; sequence RPRRSAPPRGCRRA.

It belongs to the Nudix hydrolase family. RppH subfamily. A divalent metal cation is required as a cofactor.

Accelerates the degradation of transcripts by removing pyrophosphate from the 5'-end of triphosphorylated RNA, leading to a more labile monophosphorylated state that can stimulate subsequent ribonuclease cleavage. The sequence is that of RNA pyrophosphohydrolase from Alkalilimnicola ehrlichii (strain ATCC BAA-1101 / DSM 17681 / MLHE-1).